Reading from the N-terminus, the 395-residue chain is S-adenosylmethionine synthase (395 aa).

Residue His18 coordinates ATP. Asp20 provides a ligand contact to Mg(2+). Glu46 is a binding site for K(+). L-methionine contacts are provided by Glu59 and Gln103. Positions 103–113 (QSADIAVGVDS) are flexible loop. ATP is bound by residues 170-172 (DAK), Asp244, 250-251 (RK), Ala267, and Lys271. Asp244 lines the L-methionine pocket. An L-methionine-binding site is contributed by Lys275.

The protein belongs to the AdoMet synthase family. In terms of assembly, homotetramer; dimer of dimers. The cofactor is Mg(2+). Requires K(+) as cofactor.

Its subcellular location is the cytoplasm. The catalysed reaction is L-methionine + ATP + H2O = S-adenosyl-L-methionine + phosphate + diphosphate. Its pathway is amino-acid biosynthesis; S-adenosyl-L-methionine biosynthesis; S-adenosyl-L-methionine from L-methionine: step 1/1. In terms of biological role, catalyzes the formation of S-adenosylmethionine (AdoMet) from methionine and ATP. The overall synthetic reaction is composed of two sequential steps, AdoMet formation and the subsequent tripolyphosphate hydrolysis which occurs prior to release of AdoMet from the enzyme. The sequence is that of S-adenosylmethionine synthase from Gluconacetobacter diazotrophicus (strain ATCC 49037 / DSM 5601 / CCUG 37298 / CIP 103539 / LMG 7603 / PAl5).